We begin with the raw amino-acid sequence, 142 residues long: MALNCDDKAHIRAIWPCLASHAEQYGAEALHRMFLCHPQTKTYFPNFDFHANSAHLKNHGKKVMNALTDAVKHLDHPEASLSSLSDLHAFTLRVDPGNFALLSNNILVVVAVHHSDKLSYETHQALDKFLNVVSGLLTSKYR.

Ala2 is modified (N-acetylalanine). The 141-residue stretch at 2 to 142 (ALNCDDKAHI…VSGLLTSKYR (141 aa)) folds into the Globin domain. O2 is bound at residue His59. His88 contacts heme b.

The protein belongs to the globin family. As to quaternary structure, heterotetramer of either two alpha-B chains or two alpha-C chains and two beta chains. The two major hemoglobins, B and C, associate upon deoxygenation to form a trimer of tetramers, BC2, that has a much lower affinity for oxygen than either component alone. As to expression, red blood cells.

Its function is as follows. The alpha-C chain is a component of adult hemoglobin C. The sequence is that of Hemoglobin subunit alpha-C from Aquarana catesbeiana (American bullfrog).